The sequence spans 802 residues: Oligophrenin-1 (802 aa).

The PH domain occupies 265–368 (QPTIEGYLYT…WMEAMDGKEP (104 aa)). In terms of domain architecture, Rho-GAP spans 380 to 564 (MELNEVGFKF…ILIEHFGKIY (185 aa)). Disordered stretches follow at residues 569–589 (EESA…HKPI), 607–770 (LDES…NAGE), and 783–802 (FETA…GDES). Residues 616-627 (HQTPNGTITSSI) show a composition bias toward polar residues. Over residues 716-732 (HHKEGDADSFSKVRPPG) the composition is skewed to basic and acidic residues.

Interacts with HOMER1. Interacts with AMPA receptor complexes. Interacts with SH3GL2 (endophilin-A1). Interacts (via C-terminus) with NR1D1.

Its subcellular location is the postsynapse. The protein resides in the presynapse. It localises to the cell projection. The protein localises to the axon. It is found in the dendritic spine. Its subcellular location is the dendrite. The protein resides in the cytoplasm. Stimulates GTP hydrolysis of members of the Rho family. Its action on RHOA activity and signaling is implicated in growth and stabilization of dendritic spines, and therefore in synaptic function. Critical for the stabilization of AMPA receptors at postsynaptic sites. Critical for the regulation of synaptic vesicle endocytosis at pre-synaptic terminals. Required for the localization of NR1D1 to dendrites, can suppress its repressor activity and protect it from proteasomal degradation. This Pan troglodytes (Chimpanzee) protein is Oligophrenin-1 (OPHN1).